The primary structure comprises 294 residues: 4-hydroxy-tetrahydrodipicolinate synthase (294 aa).

T47 contributes to the pyruvate binding site. Y135 (proton donor/acceptor) is an active-site residue. The Schiff-base intermediate with substrate role is filled by K163. T205 contributes to the pyruvate binding site.

Belongs to the DapA family. As to quaternary structure, homotetramer; dimer of dimers.

It is found in the cytoplasm. It carries out the reaction L-aspartate 4-semialdehyde + pyruvate = (2S,4S)-4-hydroxy-2,3,4,5-tetrahydrodipicolinate + H2O + H(+). It participates in amino-acid biosynthesis; L-lysine biosynthesis via DAP pathway; (S)-tetrahydrodipicolinate from L-aspartate: step 3/4. Catalyzes the condensation of (S)-aspartate-beta-semialdehyde [(S)-ASA] and pyruvate to 4-hydroxy-tetrahydrodipicolinate (HTPA). In Rickettsia conorii (strain ATCC VR-613 / Malish 7), this protein is 4-hydroxy-tetrahydrodipicolinate synthase.